Here is a 213-residue protein sequence, read N- to C-terminus: ATP phosphoribosyltransferase (213 aa).

It belongs to the ATP phosphoribosyltransferase family. Short subfamily. In terms of assembly, heteromultimer composed of HisG and HisZ subunits.

It is found in the cytoplasm. The enzyme catalyses 1-(5-phospho-beta-D-ribosyl)-ATP + diphosphate = 5-phospho-alpha-D-ribose 1-diphosphate + ATP. It participates in amino-acid biosynthesis; L-histidine biosynthesis; L-histidine from 5-phospho-alpha-D-ribose 1-diphosphate: step 1/9. In terms of biological role, catalyzes the condensation of ATP and 5-phosphoribose 1-diphosphate to form N'-(5'-phosphoribosyl)-ATP (PR-ATP). Has a crucial role in the pathway because the rate of histidine biosynthesis seems to be controlled primarily by regulation of HisG enzymatic activity. This chain is ATP phosphoribosyltransferase, found in Anoxybacillus flavithermus (strain DSM 21510 / WK1).